A 356-amino-acid chain; its full sequence is Malate dehydrogenase, glyoxysomal (356 aa).

Residues 1–36 (MQPIPDVNQRIARISAHLHPPKYQMEESSVLRRANC) constitute a glyoxysome transit peptide. NAD(+) is bound by residues 51–57 (GAAGGIG) and Asp-77. Residues Arg-124 and Arg-130 each coordinate substrate. Residues Asn-137 and 160–162 (ISN) each bind NAD(+). Substrate contacts are provided by Asn-162 and Arg-196. The active-site Proton acceptor is the His-220. An NAD(+)-binding site is contributed by Met-271.

Belongs to the LDH/MDH superfamily. MDH type 1 family. Homodimer.

It is found in the glyoxysome. It carries out the reaction (S)-malate + NAD(+) = oxaloacetate + NADH + H(+). This chain is Malate dehydrogenase, glyoxysomal (MDHG), found in Cucumis sativus (Cucumber).